A 544-amino-acid polypeptide reads, in one-letter code: Chaperonin GroEL 1 (544 aa).

Residues 29–32 (TLGP), 86–90 (DGTTT), G413, 479–481 (NAA), and D495 each bind ATP.

The protein belongs to the chaperonin (HSP60) family. In terms of assembly, forms a cylinder of 14 subunits composed of two heptameric rings stacked back-to-back. Interacts with the co-chaperonin GroES.

Its subcellular location is the cytoplasm. It carries out the reaction ATP + H2O + a folded polypeptide = ADP + phosphate + an unfolded polypeptide.. Functionally, together with its co-chaperonin GroES, plays an essential role in assisting protein folding. The GroEL-GroES system forms a nano-cage that allows encapsulation of the non-native substrate proteins and provides a physical environment optimized to promote and accelerate protein folding. The protein is Chaperonin GroEL 1 of Trichormus variabilis (strain ATCC 29413 / PCC 7937) (Anabaena variabilis).